A 389-amino-acid chain; its full sequence is Carbamoyl phosphate synthase small chain (389 aa).

Residues 1 to 197 (MMSSPAKAAK…AAKDASIGDD (197 aa)) are CPSase. Positions 51, 249, and 251 each coordinate L-glutamine. Positions 201–387 (HVVCMDFGMK…QEQLNEKCGV (187 aa)) constitute a Glutamine amidotransferase type-1 domain. The active-site Nucleophile is the Cys276. L-glutamine contacts are provided by Leu277, Gln280, Asn318, Gly320, and Phe321. Residues His360 and Glu362 contribute to the active site.

The protein belongs to the CarA family. As to quaternary structure, composed of two chains; the small (or glutamine) chain promotes the hydrolysis of glutamine to ammonia, which is used by the large (or ammonia) chain to synthesize carbamoyl phosphate. Tetramer of heterodimers (alpha,beta)4.

The enzyme catalyses hydrogencarbonate + L-glutamine + 2 ATP + H2O = carbamoyl phosphate + L-glutamate + 2 ADP + phosphate + 2 H(+). The catalysed reaction is L-glutamine + H2O = L-glutamate + NH4(+). The protein operates within amino-acid biosynthesis; L-arginine biosynthesis; carbamoyl phosphate from bicarbonate: step 1/1. Its pathway is pyrimidine metabolism; UMP biosynthesis via de novo pathway; (S)-dihydroorotate from bicarbonate: step 1/3. Small subunit of the glutamine-dependent carbamoyl phosphate synthetase (CPSase). CPSase catalyzes the formation of carbamoyl phosphate from the ammonia moiety of glutamine, carbonate, and phosphate donated by ATP, constituting the first step of 2 biosynthetic pathways, one leading to arginine and/or urea and the other to pyrimidine nucleotides. The small subunit (glutamine amidotransferase) binds and cleaves glutamine to supply the large subunit with the substrate ammonia. This is Carbamoyl phosphate synthase small chain from Rhodopirellula baltica (strain DSM 10527 / NCIMB 13988 / SH1).